A 293-amino-acid polypeptide reads, in one-letter code: Small ribosomal subunit biogenesis GTPase RsgA (293 aa).

A CP-type G domain is found at 63–223; it reads KNQLNRPPIA…VADTPGFSSL (161 aa). Residues 112–115 and 166–174 each bind GTP; these read SKTD and GQSGVGKSS. Positions 247, 252, 254, and 260 each coordinate Zn(2+).

It belongs to the TRAFAC class YlqF/YawG GTPase family. RsgA subfamily. Monomer. Associates with 30S ribosomal subunit, binds 16S rRNA. Zn(2+) is required as a cofactor.

It localises to the cytoplasm. Functionally, one of several proteins that assist in the late maturation steps of the functional core of the 30S ribosomal subunit. Helps release RbfA from mature subunits. May play a role in the assembly of ribosomal proteins into the subunit. Circularly permuted GTPase that catalyzes slow GTP hydrolysis, GTPase activity is stimulated by the 30S ribosomal subunit. The protein is Small ribosomal subunit biogenesis GTPase RsgA of Shouchella clausii (strain KSM-K16) (Alkalihalobacillus clausii).